A 297-amino-acid chain; its full sequence is Calponin-1 (297 aa).

The Calponin-homology (CH) domain occupies 28 to 131 (HQREQELREW…STLLALASMA (104 aa)). Calponin-like repeat units lie at residues 164-189 (IGLQ…RHLY), 204-229 (ISLQ…RQIF), and 243-268 (VSLQ…RQVY). Phosphothreonine; by ROCK2 is present on threonine 170. Residue serine 175 is modified to Phosphoserine; by ROCK2. Residues threonine 180 and threonine 184 each carry the phosphothreonine; by ROCK2 modification. At threonine 259 the chain carries Phosphothreonine; by ROCK2.

The protein belongs to the calponin family.

Functionally, thin filament-associated protein that is implicated in the regulation and modulation of smooth muscle contraction. It is capable of binding to actin, calmodulin and tropomyosin. The interaction of calponin with actin inhibits the actomyosin Mg-ATPase activity. The chain is Calponin-1 (CNN1) from Bos taurus (Bovine).